Reading from the N-terminus, the 185-residue chain is uncharacterized protein (185 aa).

The N-terminal 56 residues, 1 to 56 (MSSFTIPSPSSFSLSNSYNQTSPHSFTLRNSRSNFEFHRLRLDVESRRRSTSLRSN), are a transit peptide targeting the chloroplast. Residues 48-67 (RRSTSLRSNCSTKGTDSGEN) form a disordered region. Over residues 52-64 (SLRSNCSTKGTDS) the composition is skewed to polar residues. The stretch at 105–138 (QAEQQKQVQEIQEEVLERAKKAKERAARETMEEQ) forms a coiled coil.

The protein localises to the plastid. It localises to the chloroplast. The protein resides in the plastoglobule. This is an uncharacterized protein from Arabidopsis thaliana (Mouse-ear cress).